Here is a 1142-residue protein sequence, read N- to C-terminus: MARRISPVVAFLLCFGLSHFFEAEARLQHSVALHRQKREWIVPPQILEENVDYTKKDFIAKIRSDKEVAHMKYLRYSLRGVGADQEPFNLFVVNPETGYVRITGILDRESISQYNLSGIALFTDGSIAENDIGLRIKVKDQNDNAPVFGVMNPGAVDELSAVGTEVMRLNCFDADEPGNPNSQIKYEIVDQQPAGQSMFTVENNRRVVVANPNLDRETVDQYVLLVKASDLNGAPGGNAATGTVTIKINDVNDNVPTLGGPYEASIEENTEKVEVMRLKVSDLHLKGTDNWEGDCYIASGNEAGYFSIHMDPKTNEAVLMLDKAVDYEDVKDLNLGIGVANKAPFHPSVSGGSQGATISFGGSGGGAGSGAAGGAGAMGGASGSGGGTGASSWSSSGVPLYNVNIKVKNQPEGPKFFPGTKAIPISEGKAFDSTEIIARYPAIDTDTGKEATNVKYIKSSDPDNWLTIDEKTGAIRMNKAPDRESKYLVNGTYYAKVLSITQDLPSKTATGTIAIQVEDFNDHCPTLISNVQTLCTDKDAVLVTAKDEDAPPNGAPFDFNIVSEGTAGKWTVEYMNDTTAIFRTHEKLWPGPHELMVEVTDQQGLKCPEPQKLQVDVCTCKNQGGCDRTATGDAKKGSRLGPAGIGLLLLALLALLLIPLLLLLCTCGMTGAFTDMPFETKVHLISSNTEGQGEDRDVPLMCPPSNVDGMGFMTKDYMAVGAMHSAGLGLGVGAGVGAAGFLESTSTMGGRGYNEMELDYMNSIGRNNAYSSRDMAGDFDGMALSDGYLCEYYSQKSRVVDGFGKDDPMVYDYEGKGSPVGSVGCCSLLEDQNDLEFLNDLGPKFTTLADICGGKKTEIPAPAPAPLPPPPKPVVDRSEVVSSTTNILNTGNIATNRVNTVNVASNMATASSTRVENVLVTDNRPTMITSVHPAPTLLVQPQPMYYMVEQQPSTVLVAERPAMTQGMYVLNSGPVAEGMVVQGGNIAANTLTRGERMVLVFRGGPAQALNNGMLHTSNLSGSQLLLVDGGATSGQVLQGTIQRGVAGSQGLMFVDGQGGQVIQGSINNGISTHGGSQNVFYVENKGGSSVVQGGLQMGKASTAGSLIGDVGIGGSSVKITQNPSSHKVVVQERKVVTTQSVK.

Residues methionine 1 to serine 18 form the signal peptide. A propeptide spanning residues histidine 19–arginine 38 is cleaved from the precursor. Residues glutamate 39–alanine 643 lie on the Extracellular side of the membrane. Cadherin domains follow at residues serine 64–phenylalanine 148, valine 156–leucine 258, glycine 259–phenylalanine 416, and phenylalanine 417–leucine 527. Asparagine 115 carries an N-linked (GlcNAc...) asparagine glycan. The tract at residues serine 369 to glycine 389 is disordered. 2 N-linked (GlcNAc...) asparagine glycosylation sites follow: asparagine 490 and asparagine 576. The chain crosses the membrane as a helical span at residues glycine 644–leucine 664. The Cytoplasmic segment spans residues cysteine 665–lysine 1142. Desmoglein repeat repeat units follow at residues valine 948–proline 974, valine 975–valine 998, leucine 999–glycine 1039, and threonine 1040–serine 1071.

The protein localises to the cell junction. It is found in the desmosome. The protein resides in the cell membrane. Its subcellular location is the cytoplasm. A component of desmosome cell-cell junctions which are required for positive regulation of cellular adhesion. Involved in the interaction of plaque proteins and intermediate filaments mediating cell-cell adhesion. Required for embryogenesis, specifically for progression of epiboly and normal convergence-extension movements during gastrulation. The protein is Desmoglein-2.1 of Danio rerio (Zebrafish).